The following is a 97-amino-acid chain: Eotaxin (97 aa).

The first 23 residues, 1 to 23, serve as a signal peptide directing secretion; it reads MQLSTALLFLLLTATSFTSQVLA. 2 cysteine pairs are disulfide-bonded: C32/C57 and C33/C73. T94 carries an O-linked (GalNAc...) threonine glycan.

This sequence belongs to the intercrine beta (chemokine CC) family.

It is found in the secreted. Its function is as follows. In response to the presence of allergens, this protein directly promotes the accumulation of eosinophils (a prominent feature of allergic inflammatory reactions), but not lymphocytes, macrophages or neutrophils. Binds to CCR3. The chain is Eotaxin (Ccl11) from Rattus norvegicus (Rat).